Here is a 609-residue protein sequence, read N- to C-terminus: Major facilitator superfamily domain-containing protein 6-like protein A (609 aa).

2 helical membrane passes run 41–61 and 78–98; these read LGLG…VHLL and FFIM…AYYP. The disordered stretch occupies residues 201-241; that stretch reads SGKAQKVMSSKSAASNSKQRSSLNNHTSPYATHPNVSHHPS. Polar residues predominate over residues 207–230; sequence VMSSKSAASNSKQRSSLNNHTSPY. The next 9 membrane-spanning stretches (helical) occupy residues 265 to 285, 307 to 327, 340 to 360, 388 to 408, 420 to 440, 452 to 472, 475 to 495, 513 to 535, and 541 to 561; these read IFLI…PLEW, LWIW…FLVD, VFFH…LSTL, IVLT…TQNF, ELYM…LYFF, WMVA…SFLW, WSVL…WWAI, LALR…GFII, and AVLY…FLLV.

It belongs to the major facilitator superfamily. MFSD6 family.

The protein localises to the membrane. The sequence is that of Major facilitator superfamily domain-containing protein 6-like protein A (mfsd6l-a) from Xenopus laevis (African clawed frog).